The chain runs to 172 residues: Peptide methionine sulfoxide reductase MsrA 2 (172 aa).

Cys-12 is a catalytic residue.

This sequence belongs to the MsrA Met sulfoxide reductase family.

The catalysed reaction is L-methionyl-[protein] + [thioredoxin]-disulfide + H2O = L-methionyl-(S)-S-oxide-[protein] + [thioredoxin]-dithiol. The enzyme catalyses [thioredoxin]-disulfide + L-methionine + H2O = L-methionine (S)-S-oxide + [thioredoxin]-dithiol. In terms of biological role, has an important function as a repair enzyme for proteins that have been inactivated by oxidation. Catalyzes the reversible oxidation-reduction of methionine sulfoxide in proteins to methionine. In Lactococcus lactis subsp. lactis (strain IL1403) (Streptococcus lactis), this protein is Peptide methionine sulfoxide reductase MsrA 2 (msrA2).